The primary structure comprises 210 residues: Ribonuclease HII (210 aa).

An RNase H type-2 domain is found at 2–203; the sequence is SGVMGIDEAG…YKRVESEVKQ (202 aa). A divalent metal cation contacts are provided by aspartate 8, glutamate 9, and aspartate 99.

It belongs to the RNase HII family. Mn(2+) is required as a cofactor. The cofactor is Mg(2+).

The protein localises to the cytoplasm. It catalyses the reaction Endonucleolytic cleavage to 5'-phosphomonoester.. Functionally, endonuclease that specifically degrades the RNA of RNA-DNA hybrids. This is Ribonuclease HII from Methanopyrus kandleri (strain AV19 / DSM 6324 / JCM 9639 / NBRC 100938).